Reading from the N-terminus, the 282-residue chain is Ribosome-inactivating protein bryodin II (282 aa).

The signal sequence occupies residues 1 to 21 (MRSIGFYSVLALYVGAHVTED). Asn-25 carries an N-linked (GlcNAc...) asparagine glycan. Residue Glu-183 is part of the active site.

The protein belongs to the ribosome-inactivating protein family. Type 1 RIP subfamily.

The enzyme catalyses Endohydrolysis of the N-glycosidic bond at one specific adenosine on the 28S rRNA.. In terms of biological role, ribosome-inactivating protein of type 1, inhibits protein synthesis in animal cells. This Bryonia dioica (Red bryony) protein is Ribosome-inactivating protein bryodin II.